The sequence spans 486 residues: MSGTEKKLGFLASGYGLSPKEKDYPVLGFAVDSRKVAKGFVFGAFPGAKVNGEDFIEKAIAAGAVAIVARPEVKIEGAVHLVAENPRLAFAEMAARFYAPFPPVMAAVTGTNGKTSVAELCRQLWTITGHKAASIGTLGVITAKNSYSLGMTTPDVVTFLSCCSDLARADISHVIFEASSHGLDQYRSDGAKVIAGAFTSFSRDHLDYHGTMERYLAAKLRLFDERIAPDGTAVIWADDPAATTVIAHVQKRGLKLIDIGEKAEAIRLVNREADSQGQMITLSIKGESYKIRLPLIGGYQLSNALVAAGLVLATGGDIKQTMAALTLLKPVRGRLERATQSQNGAEVYVDYAHTPDGLRAAIEALRPHTEGLLWVVFGAGGDRDKGKRPEMGKIAANLADHVIVTDDNPRGEDAATIRKEVLVGAPLAEEIGGRKEAIFSAIKRAEKGDIVLIAGKGHEQGQIIGRGETMRVLPFDDVTVAKEAVL.

Ser33 is a UDP-N-acetyl-alpha-D-muramoyl-L-alanyl-D-glutamate binding site. 110-116 contacts ATP; that stretch reads GTNGKTS. Residues 152 to 153, Ser179, Gln185, and Arg187 contribute to the UDP-N-acetyl-alpha-D-muramoyl-L-alanyl-D-glutamate site; that span reads TT. At Lys219 the chain carries N6-carboxylysine. Meso-2,6-diaminopimelate contacts are provided by residues Arg383, 407-410, Gly455, and Glu459; that span reads DNPR. The Meso-diaminopimelate recognition motif motif lies at 407–410; the sequence is DNPR.

Belongs to the MurCDEF family. MurE subfamily. Mg(2+) is required as a cofactor. In terms of processing, carboxylation is probably crucial for Mg(2+) binding and, consequently, for the gamma-phosphate positioning of ATP.

Its subcellular location is the cytoplasm. It carries out the reaction UDP-N-acetyl-alpha-D-muramoyl-L-alanyl-D-glutamate + meso-2,6-diaminopimelate + ATP = UDP-N-acetyl-alpha-D-muramoyl-L-alanyl-gamma-D-glutamyl-meso-2,6-diaminopimelate + ADP + phosphate + H(+). The protein operates within cell wall biogenesis; peptidoglycan biosynthesis. In terms of biological role, catalyzes the addition of meso-diaminopimelic acid to the nucleotide precursor UDP-N-acetylmuramoyl-L-alanyl-D-glutamate (UMAG) in the biosynthesis of bacterial cell-wall peptidoglycan. This is UDP-N-acetylmuramoyl-L-alanyl-D-glutamate--2,6-diaminopimelate ligase from Zymomonas mobilis subsp. mobilis (strain ATCC 31821 / ZM4 / CP4).